The sequence spans 942 residues: Isoleucine--tRNA ligase (942 aa).

Residues 58 to 68 (PYANGDIHIGH) carry the 'HIGH' region motif. Glutamate 566 is a binding site for L-isoleucyl-5'-AMP. The 'KMSKS' region motif lies at 607–611 (KMSKS). Residue lysine 610 coordinates ATP. Zn(2+) contacts are provided by cysteine 905, cysteine 908, cysteine 925, and cysteine 928.

It belongs to the class-I aminoacyl-tRNA synthetase family. IleS type 1 subfamily. Monomer. Zn(2+) is required as a cofactor.

Its subcellular location is the cytoplasm. It catalyses the reaction tRNA(Ile) + L-isoleucine + ATP = L-isoleucyl-tRNA(Ile) + AMP + diphosphate. Functionally, catalyzes the attachment of isoleucine to tRNA(Ile). As IleRS can inadvertently accommodate and process structurally similar amino acids such as valine, to avoid such errors it has two additional distinct tRNA(Ile)-dependent editing activities. One activity is designated as 'pretransfer' editing and involves the hydrolysis of activated Val-AMP. The other activity is designated 'posttransfer' editing and involves deacylation of mischarged Val-tRNA(Ile). This Vibrio campbellii (strain ATCC BAA-1116) protein is Isoleucine--tRNA ligase.